Reading from the N-terminus, the 308-residue chain is Zinc transporter ZIP9 (308 aa).

The chain crosses the membrane as a helical span at residues 4-24 (FLSISLLSVAMLVGCYVAGII). Asn-29 is a glycosylation site (N-linked (GlcNAc...) asparagine). The next 5 helical transmembrane spans lie at 35-55 (LKLV…AVIV), 107-127 (AYIG…DQIG), 147-167 (ITTT…LGAA), 177-197 (LIVF…LVSF), and 211-231 (HLLV…LGLS). N-linked (GlcNAc...) asparagine glycosylation occurs at Asn-242. A run of 2 helical transmembrane segments spans residues 245–265 (GVAM…HVLP) and 287–307 (LEVA…IGHQ).

This sequence belongs to the ZIP transporter (TC 2.A.5) family.

The protein resides in the golgi apparatus. The protein localises to the trans-Golgi network membrane. Its subcellular location is the cell membrane. It localises to the cytoplasm. It is found in the perinuclear region. The protein resides in the mitochondrion. The protein localises to the nucleus. The enzyme catalyses Zn(2+)(in) = Zn(2+)(out). Transports zinc ions across cell and organelle membranes into the cytoplasm and regulates intracellular zinc homeostasis. Participates in the zinc ions efflux out of the secretory compartments. Regulates intracellular zinc level, resulting in the enhancement of AKT1 and MAPK3/MAPK1 (Erk1/2) phosphorylation in response to the BCR activation. Also functions as a membrane androgen receptor that mediates, through a G protein, the non-classical androgen signaling pathway, characterized by the activation of MAPK3/MAPK1 (Erk1/2) and transcription factors CREB1 or ATF1. This pathway contributes to CLDN1 and CLDN5 expression and tight junction formation between adjacent Sertoli cells. Mediates androgen-induced vascular endothelial cell proliferation through activation of an inhibitory G protein leading to the AKT1 and MAPK3/MAPK1 (Erk1/2) activation which in turn modulate inhibition (phosphorylation) of GSK3B and CCND1 transcription. Moreover, has dual functions as a membrane-bound androgen receptor and as an androgen-dependent zinc transporter both of which are mediated through an inhibitory G protein (Gi) that mediates both MAP kinase and zinc signaling leading to the androgen-dependent apoptotic process. The polypeptide is Zinc transporter ZIP9 (Mus musculus (Mouse)).